Consider the following 542-residue polypeptide: CTP synthase (542 aa).

An amidoligase domain region spans residues 1 to 265 (MTRYIFITGG…DDEVLSVFGI (265 aa)). Serine 13 is a binding site for CTP. Residue serine 13 participates in UTP binding. Residues 14–19 (SLGKGL) and aspartate 71 contribute to the ATP site. The Mg(2+) site is built by aspartate 71 and glutamate 139. Residues 146–148 (DIE), 186–191 (KTKPTQ), and lysine 222 contribute to the CTP site. UTP is bound by residues 186 to 191 (KTKPTQ) and lysine 222. One can recognise a Glutamine amidotransferase type-1 domain in the interval 291 to 541 (TIAIVGKYTG…VEAAVEQSRL (251 aa)). Residue glycine 353 coordinates L-glutamine. The Nucleophile; for glutamine hydrolysis role is filled by cysteine 380. Residues 381–384 (FGMQ), glutamate 404, and arginine 469 each bind L-glutamine. Catalysis depends on residues histidine 514 and glutamate 516.

This sequence belongs to the CTP synthase family. In terms of assembly, homotetramer.

It catalyses the reaction UTP + L-glutamine + ATP + H2O = CTP + L-glutamate + ADP + phosphate + 2 H(+). It carries out the reaction L-glutamine + H2O = L-glutamate + NH4(+). The catalysed reaction is UTP + NH4(+) + ATP = CTP + ADP + phosphate + 2 H(+). Its pathway is pyrimidine metabolism; CTP biosynthesis via de novo pathway; CTP from UDP: step 2/2. Its activity is regulated as follows. Allosterically activated by GTP, when glutamine is the substrate; GTP has no effect on the reaction when ammonia is the substrate. The allosteric effector GTP functions by stabilizing the protein conformation that binds the tetrahedral intermediate(s) formed during glutamine hydrolysis. Inhibited by the product CTP, via allosteric rather than competitive inhibition. In terms of biological role, catalyzes the ATP-dependent amination of UTP to CTP with either L-glutamine or ammonia as the source of nitrogen. Regulates intracellular CTP levels through interactions with the four ribonucleotide triphosphates. This chain is CTP synthase, found in Parvibaculum lavamentivorans (strain DS-1 / DSM 13023 / NCIMB 13966).